The chain runs to 131 residues: Interleukin-13 (131 aa).

Residues 1 to 18 form the signal peptide; it reads MALWVTAVLALACLGGLA. N-linked (GlcNAc...) asparagine glycans are attached at residues N42, N53, N76, and N121. Intrachain disulfides connect C52–C80 and C68–C94.

It belongs to the IL-4/IL-13 family. In terms of assembly, interacts with IL13RA2.

It is found in the secreted. Cytokine that plays important roles in allergic inflammation and immune response to parasite infection. Synergizes with IL2 in regulating interferon-gamma synthesis. Stimulates B-cell proliferation, and activation of eosinophils, basophils, and mast cells. Plays an important role in controlling IL33 activity by modulating the production of transmembrane and soluble forms of interleukin-1 receptor-like 1/IL1RL1. Displays the capacity to antagonize Th1-driven proinflammatory immune response and downregulates synthesis of many proinflammatory cytokines including IL1, IL6, IL10, IL12 and TNF-alpha through a mechanism that partially involves suppression of NF-kappa-B. Also functions on nonhematopoietic cells, including endothelial cells where it induces vascular cell adhesion protein 1/VCAM1, which is important in the recruitment of eosinophils. Exerts its biological effects through its receptors which comprises the IL4R chain and the IL13RA1 chain, to activate JAK1 and TYK2, leading to the activation of STAT6. Aside from IL13RA1, another receptor IL13RA2 acts as a high affinity decoy for IL13 and mediates internalization and depletion of extracellular IL13. The sequence is that of Interleukin-13 (Il13) from Rattus norvegicus (Rat).